We begin with the raw amino-acid sequence, 119 residues long: Small ribosomal subunit protein bS6 (119 aa).

Residues 96-119 (VTEPSPLARSQEKDEEEGGRTAEA) form a disordered region.

It belongs to the bacterial ribosomal protein bS6 family.

In terms of biological role, binds together with bS18 to 16S ribosomal RNA. The protein is Small ribosomal subunit protein bS6 of Alkalilimnicola ehrlichii (strain ATCC BAA-1101 / DSM 17681 / MLHE-1).